A 77-amino-acid polypeptide reads, in one-letter code: Sec-independent protein translocase protein TatA (77 aa).

A helical transmembrane segment spans residues 1 to 21 (MGGLSIWHWLIVLLIVALVFG). A disordered region spans residues 43 to 77 (MKESEAPADAQQLPRSGSVNVDAKDAARSSDSNKA). Basic and acidic residues predominate over residues 64 to 77 (DAKDAARSSDSNKA).

Belongs to the TatA/E family. As to quaternary structure, the Tat system comprises two distinct complexes: a TatABC complex, containing multiple copies of TatA, TatB and TatC subunits, and a separate TatA complex, containing only TatA subunits. Substrates initially bind to the TatABC complex, which probably triggers association of the separate TatA complex to form the active translocon.

The protein resides in the cell inner membrane. In terms of biological role, part of the twin-arginine translocation (Tat) system that transports large folded proteins containing a characteristic twin-arginine motif in their signal peptide across membranes. TatA could form the protein-conducting channel of the Tat system. This Burkholderia mallei (strain NCTC 10247) protein is Sec-independent protein translocase protein TatA.